We begin with the raw amino-acid sequence, 494 residues long: 4-hydroxyphenylacetate 3-monooxygenase oxygenase component (494 aa).

Residues R103–Y107 and H149 contribute to the substrate site. Residues H149 to L151, Q155 to R158, and T192 contribute to the FAD site. Position 205 to 206 (S205 to T206) interacts with substrate. D455–R458 provides a ligand contact to FAD.

The protein belongs to the FADH(2)-utilizing monooxygenase family. In terms of assembly, 4-HPA 3-monooxygenase consists of a reductase component HpaI and an oxygenase component HpaH.

The enzyme catalyses 4-hydroxyphenylacetate + FADH2 + O2 = 3,4-dihydroxyphenylacetate + FAD + H2O + H(+). The protein operates within aromatic compound metabolism; 4-hydroxyphenylacetate degradation; pyruvate and succinate semialdehyde from 4-hydroxyphenylacetate: step 1/7. In terms of biological role, utilizes FADH(2) supplied by HpaI, to catalyze the hydroxylation of 4-hydroxyphenylacetic acid, leading to the production of 3,4-dihydroxyphenylacetic acid (DHPA). The protein is 4-hydroxyphenylacetate 3-monooxygenase oxygenase component (hpaH) of Geobacillus sp. (strain PA-9).